Here is a 531-residue protein sequence, read N- to C-terminus: Cytochrome P450 monooxygenase acuC (531 aa).

A helical transmembrane segment spans residues 3-23; it reads PIVWLLGGAIALLVVVIRAAW. Position 447 (Cys-447) interacts with heme.

It belongs to the cytochrome P450 family. Heme serves as cofactor.

The protein resides in the endoplasmic reticulum membrane. The enzyme catalyses 3-methylphenol + reduced [NADPH--hemoprotein reductase] + O2 = 3-hydroxybenzyl alcohol + oxidized [NADPH--hemoprotein reductase] + H2O + H(+). It functions in the pathway secondary metabolite biosynthesis. Its function is as follows. Cytochrome P450 monooxygenase; part of the gene cluster that mediates the biosynthesis of aculins. The pathway begins with the synthesis of 6-methylsalicylic acid by the polyketide synthase (PKS) acuA via condensation of acetate and malonate units. The 6-methylsalicylic acid decarboxylase acuB then catalyzes the decarboxylation of 6-methylsalicylic acid to yield m-cresol (also known as 3-methylphenol). These first reactions occur in the cytosol. The intermediate m-cresol is then transported into the endoplasmic reticulum where the cytochrome P450 monooxygenase acuC converts it to m-hydroxybenzyl alcohol, which is further converted to gentisyl alcohol by the cytochrome P450 monooxygenase acuD. Gentisyl alcohol is further oxidized by the oxidoreductase acuE that probably catalyzes hydroxylation of the aromatic ring. The aromatic system might then be opened by oxidation through a Baeyer-Villiger type of oxidation, which could be catalyzed by acuF, with the carboxylic acid at C-1 subsequently reduced to an aldehyde by acuG. Subsequently, a hemiacetal is formed, before the dehydrogenase acuH would reduce the double bond between C-4 and C-6. Finally, keto-enol tautomerism results in formation of aculinic acid, which exists as two diastereomers (both R/S configurations at C-1) by non-enzymatic hemiacetal formation. The carboxypeptidase acuI could be involved in the linking of aculinic acid to an aculene A moiety produced by the aculene biosynthesis cluster and which leads to the production of aculin A. AcuI may also be involved in the attachment of proline to aculinic acid to form epi-aculins A and B. The sequence is that of Cytochrome P450 monooxygenase acuC from Aspergillus aculeatus (strain ATCC 16872 / CBS 172.66 / WB 5094).